The chain runs to 246 residues: UL16-binding protein 2 (246 aa).

Positions 1 to 25 (MAAAAATKILLCLPLLLLLSGWSRA) are cleaved as a signal peptide. The MHC class I alpha-1 like stretch occupies residues 29–117 (DPHSLCYDIT…IQLENYTPKE (89 aa)). The cysteines at positions 50 and 66 are disulfide-linked. 2 N-linked (GlcNAc...) asparagine glycosylation sites follow: Asn68 and Asn82. Residues 118–210 (PLTLQARMSC…MDSTLEPSAG (93 aa)) are MHC class I alpha-2 like. An intrachain disulfide couples Cys127 to Cys190. Residue Ser216 coordinates a protein. A lipid anchor (GPI-anchor amidated serine) is attached at Ser217. The propeptide at 218–246 (GTTQLRATATTLILCCLLIILPCFILPGI) is removed in mature form.

Belongs to the MHC class I family. Interacts with KLRK1/NKG2D. Does not bind to beta2-microglobulin. In terms of assembly, (Microbial infection) In CMV-infected cells, interacts with the viral glycoprotein UL16; this interaction causes ULBP2 retention in the endoplasmic reticulum and cis-Golgi and prevents binding to and activation of KLRK1/NKG2D, providing CMV with an immune evasion mechanism. As to expression, expressed in various types of cancer cell lines and in the fetus, but not in normal tissues.

Its subcellular location is the cell membrane. It localises to the endoplasmic reticulum. The protein resides in the secreted. In terms of biological role, binds and activates the KLRK1/NKG2D receptor, mediating natural killer cell cytotoxicity. This chain is UL16-binding protein 2, found in Homo sapiens (Human).